The primary structure comprises 485 residues: Inosine-5'-monophosphate dehydrogenase (485 aa).

2 CBS domains span residues 99-154 (IVED…TVKE) and 156-212 (MTRE…KNAV). NAD(+)-binding positions include aspartate 247 and 294–296 (GIG). Residues glycine 296 and glycine 298 each contribute to the K(+) site. Residue serine 299 coordinates IMP. Position 301 (cysteine 301) interacts with K(+). The active-site Thioimidate intermediate is cysteine 301. Residues 334-336 (DGG), 357-358 (GN), and 381-385 (YRGMG) contribute to the IMP site. Arginine 397 acts as the Proton acceptor in catalysis. Glutamate 412 provides a ligand contact to IMP. 3 residues coordinate K(+): glutamate 466, serine 467, and histidine 468.

Belongs to the IMPDH/GMPR family. In terms of assembly, homotetramer. The cofactor is K(+).

The enzyme catalyses IMP + NAD(+) + H2O = XMP + NADH + H(+). Its pathway is purine metabolism; XMP biosynthesis via de novo pathway; XMP from IMP: step 1/1. With respect to regulation, mycophenolic acid (MPA) is a non-competitive inhibitor that prevents formation of the closed enzyme conformation by binding to the same site as the amobile flap. In contrast, mizoribine monophosphate (MZP) is a competitive inhibitor that induces the closed conformation. MPA is a potent inhibitor of mammalian IMPDHs but a poor inhibitor of the bacterial enzymes. MZP is a more potent inhibitor of bacterial IMPDH. In terms of biological role, catalyzes the conversion of inosine 5'-phosphate (IMP) to xanthosine 5'-phosphate (XMP), the first committed and rate-limiting step in the de novo synthesis of guanine nucleotides, and therefore plays an important role in the regulation of cell growth. The polypeptide is Inosine-5'-monophosphate dehydrogenase (Pyrococcus furiosus (strain ATCC 43587 / DSM 3638 / JCM 8422 / Vc1)).